A 243-amino-acid polypeptide reads, in one-letter code: Carboxy-S-adenosyl-L-methionine synthase (243 aa).

S-adenosyl-L-methionine-binding positions include tyrosine 40, 65 to 67 (GCS), 90 to 91 (DN), 118 to 119 (DI), asparagine 133, and arginine 200.

Belongs to the class I-like SAM-binding methyltransferase superfamily. Cx-SAM synthase family. Homodimer.

It catalyses the reaction prephenate + S-adenosyl-L-methionine = carboxy-S-adenosyl-L-methionine + 3-phenylpyruvate + H2O. Catalyzes the conversion of S-adenosyl-L-methionine (SAM) to carboxy-S-adenosyl-L-methionine (Cx-SAM). The polypeptide is Carboxy-S-adenosyl-L-methionine synthase (Shewanella sp. (strain W3-18-1)).